Here is a 356-residue protein sequence, read N- to C-terminus: GDP-mannose:di-myo-inositol-1,3'-phosphate beta-1,2-mannosyltransferase (356 aa).

This sequence belongs to the MDIP synthase family. Mg(2+) is required as a cofactor.

It catalyses the reaction bis(myo-inositol) 1,3'-phosphate + GDP-alpha-D-mannose = 2-O-(beta-D-mannosyl)-bis(myo-inositol) 1,3'-phosphate + GDP + H(+). The enzyme catalyses 2-O-(beta-D-mannosyl)-bis(myo-inositol) 1,3'-phosphate + GDP-alpha-D-mannose = 2-O-(beta-D-mannosyl-(1-&gt;2)-beta-D-mannosyl)-bis(myo-inositol) 1,3'-phosphate + GDP + H(+). The catalysed reaction is bis(myo-inositol) 1,3'-phosphate + 2 GDP-alpha-D-mannose = 2-O-(beta-D-mannosyl-(1-&gt;2)-beta-D-mannosyl)-bis(myo-inositol) 1,3'-phosphate + 2 GDP + 2 H(+). Functionally, catalyzes the transfer of the mannosyl group from GDP-mannose to di-myo-inositol-1,3'-phosphate (DIP), producing mannosyl-di-myo-inositol phosphate (MDIP). Can also use MDIP as an acceptor of a second mannose residue, yielding di-mannosyl-di-myo-inositol phosphate (MMDIP). Minor amounts of the tri-mannosylated form are also formed. This Thermotoga maritima (strain ATCC 43589 / DSM 3109 / JCM 10099 / NBRC 100826 / MSB8) protein is GDP-mannose:di-myo-inositol-1,3'-phosphate beta-1,2-mannosyltransferase.